A 616-amino-acid chain; its full sequence is Chaperone protein HscA (616 aa).

Belongs to the heat shock protein 70 family.

Its function is as follows. Chaperone involved in the maturation of iron-sulfur cluster-containing proteins. Has a low intrinsic ATPase activity which is markedly stimulated by HscB. Involved in the maturation of IscU. In Salmonella heidelberg (strain SL476), this protein is Chaperone protein HscA.